A 303-amino-acid chain; its full sequence is NAD kinase (303 aa).

The active-site Proton acceptor is D71. NAD(+) contacts are provided by residues 71 to 72 (DG), 145 to 146 (ND), R156, R173, D175, 186 to 191 (TGYSLS), and Q245.

The protein belongs to the NAD kinase family. A divalent metal cation serves as cofactor.

The protein resides in the cytoplasm. The catalysed reaction is NAD(+) + ATP = ADP + NADP(+) + H(+). In terms of biological role, involved in the regulation of the intracellular balance of NAD and NADP, and is a key enzyme in the biosynthesis of NADP. Catalyzes specifically the phosphorylation on 2'-hydroxyl of the adenosine moiety of NAD to yield NADP. The protein is NAD kinase of Magnetococcus marinus (strain ATCC BAA-1437 / JCM 17883 / MC-1).